Here is a 123-residue protein sequence, read N- to C-terminus: Large ribosomal subunit protein bL12 (123 aa).

This sequence belongs to the bacterial ribosomal protein bL12 family. In terms of assembly, homodimer. Part of the ribosomal stalk of the 50S ribosomal subunit. Forms a multimeric L10(L12)X complex, where L10 forms an elongated spine to which 2 to 4 L12 dimers bind in a sequential fashion. Binds GTP-bound translation factors.

Its function is as follows. Forms part of the ribosomal stalk which helps the ribosome interact with GTP-bound translation factors. Is thus essential for accurate translation. This chain is Large ribosomal subunit protein bL12, found in Maricaulis maris (strain MCS10) (Caulobacter maris).